The sequence spans 31 residues: LysM-domain containing protein (31 aa).

The LysM 1 repeat unit spans residues 1–28; the sequence is YSPSLTDLQSYNAMNGPALKAGDILAVP.

This is LysM-domain containing protein from Jatropha curcas (Barbados nut).